Reading from the N-terminus, the 362-residue chain is Protein RAFTIN 1B (362 aa).

The first 20 residues, 1-20, serve as a signal peptide directing secretion; sequence MARFLVALLAATLVAVQAGG. The interval 58–94 is disordered; that stretch reads STSFVRDPEDRPPFDYRDYSRSSSDDEPSKSTVAASG. Positions 63-86 are enriched in basic and acidic residues; sequence RDPEDRPPFDYRDYSRSSSDDEPS. N-linked (GlcNAc...) asparagine glycosylation occurs at asparagine 102. The region spanning 142 to 356 is the BURP domain; it reads FFHEEAVRVG…PYGHIIWAKN (215 aa).

In terms of tissue distribution, specifically expressed in anthers, in the tapetum and microspores (at protein level).

Its function is as follows. Required for pollen development. Probably synthesized in the tapetum, packaged in Ubisch bodies and transported at appropriate stages to the micropsores. In Triticum aestivum (Wheat), this protein is Protein RAFTIN 1B (RAFTIN1B).